The chain runs to 689 residues: Quinidine resistance protein 3 (689 aa).

A compositionally biased stretch (polar residues) spans 1 to 24 (MQAQGSQSNVGSLRSNCSDNSLPN). The interval 1 to 73 (MQAQGSQSNV…DNQLSRLKSE (73 aa)) is disordered. The Extracellular segment spans residues 1–108 (MQAQGSQSNV…RDYPPMMKKM (108 aa)). Basic and acidic residues-rich tracts occupy residues 29–51 (MHCD…EKTN) and 59–73 (SREH…LKSE). A helical transmembrane segment spans residues 109-131 (IVFLIAFSSMMGPMGTSIIFPAI). Over 132-139 (NSITTEFK) the chain is Cytoplasmic. The chain crosses the membrane as a helical span at residues 140-163 (TSVIMVNVSIGVYLLSLGVFPLWW). Residues 164–175 (SSLSELEGRRTT) are Extracellular-facing. Residues 176 to 193 (YITSFALLFAFNIGSALA) traverse the membrane as a helical segment. Over 194–235 (PDINSFIALRMLCGAASASVQSVGAGTVADLYISEDRGKNLS) the chain is Cytoplasmic. A helical transmembrane segment spans residues 236–256 (YYYLGPLLAPLLSPIFGSLLV). The Extracellular portion of the chain corresponds to 257 to 265 (NRWPWRSTQ). A helical transmembrane segment spans residues 266-283 (WFMVILSGCNVILLTVLL). The Cytoplasmic portion of the chain corresponds to 284–475 (PETLRKQDSK…KSLHFLEYPP (192 aa)). Serine 436 is modified (phosphoserine). The helical transmembrane segment at 476-493 (VALAITFSAISFSTVYFV) threads the bilayer. Residues 494-510 (NMTVEYKYSRPPYNFKP) lie on the Extracellular side of the membrane. A helical transmembrane segment spans residues 511–532 (LYIGLLYIPNSVTYFFASIYGG). Residues 533–558 (RWVDMLLKRYKEKYGILAPEARISWN) lie on the Cytoplasmic side of the membrane. A helical transmembrane segment spans residues 559 to 577 (VVTSVISFPIALLIFGWCL). Residues 578 to 586 (DKKCHWVTP) lie on the Extracellular side of the membrane. Residues 587 to 609 (LIGTALFGYAAMMTIGATLSYLV) form a helical membrane-spanning segment. The Cytoplasmic portion of the chain corresponds to 610–624 (DSLPGKGATGVALNN). The chain crosses the membrane as a helical span at residues 625–642 (LIRQILAATAVFVTTPML). Residues 643 to 648 (NGMGTG) lie on the Extracellular side of the membrane. The helical transmembrane segment at 649–668 (WAFTMLAFIVLGASSVLIIL) threads the bilayer. The Cytoplasmic segment spans residues 669-689 (KKHGDYWRENYDLQKLYDKID).

The protein belongs to the major facilitator superfamily. CAR1 family.

Its subcellular location is the cell membrane. Its function is as follows. Multidrug resistance transporter involved in resistance and adaptation to quinidine and to the herbicide barban (4-chloro-2-butynyl [3-chlorophenyl] carbamate). The sequence is that of Quinidine resistance protein 3 (QDR3) from Saccharomyces cerevisiae (strain ATCC 204508 / S288c) (Baker's yeast).